Consider the following 614-residue polypeptide: Translation initiation factor IF-2 (614 aa).

The tr-type G domain occupies 115 to 283 (ARAPIVTIMG…ILLIAELNDY (169 aa)). Residues 124–131 (GHVDHGKT) form a G1 region. 124-131 (GHVDHGKT) is a GTP binding site. The tract at residues 149-153 (GITQH) is G2. Residues 170–173 (DTPG) are G3. Residues 170–174 (DTPGH) and 224–227 (NKMD) each bind GTP. A G4 region spans residues 224–227 (NKMD). A G5 region spans residues 260–262 (SAL).

It belongs to the TRAFAC class translation factor GTPase superfamily. Classic translation factor GTPase family. IF-2 subfamily.

The protein localises to the cytoplasm. One of the essential components for the initiation of protein synthesis. Protects formylmethionyl-tRNA from spontaneous hydrolysis and promotes its binding to the 30S ribosomal subunits. Also involved in the hydrolysis of GTP during the formation of the 70S ribosomal complex. This Ureaplasma urealyticum serovar 10 (strain ATCC 33699 / Western) protein is Translation initiation factor IF-2.